A 480-amino-acid chain; its full sequence is UDP-glycosyltransferase 71C5 (480 aa).

UDP-alpha-D-glucose is bound by residues Ser290, 349-351 (APQ), 366-374 (HCGWNSVQE), and 388-391 (YAEQ).

The protein belongs to the UDP-glycosyltransferase family.

In terms of biological role, possesses low quercetin 3-O-glucosyltransferase activity in vitro. The polypeptide is UDP-glycosyltransferase 71C5 (UGT71C5) (Arabidopsis thaliana (Mouse-ear cress)).